The sequence spans 20 residues: Ferric reductase A (20 aa).

Monomer.

It carries out the reaction 2 a Fe(II)-siderophore + NAD(+) + H(+) = 2 a Fe(III)-siderophore + NADH. In terms of biological role, reductase activity that acts on Fe(3+)-chelates and NADH as an electron donor and requires the presence of FMN for full activity. May play a role in iron uptake. The polypeptide is Ferric reductase A (ferA) (Paracoccus denitrificans).